The sequence spans 561 residues: DNA ligase B (561 aa).

The active-site N6-AMP-lysine intermediate is the Lys125.

It belongs to the NAD-dependent DNA ligase family. LigB subfamily.

It catalyses the reaction NAD(+) + (deoxyribonucleotide)n-3'-hydroxyl + 5'-phospho-(deoxyribonucleotide)m = (deoxyribonucleotide)n+m + AMP + beta-nicotinamide D-nucleotide.. In terms of biological role, catalyzes the formation of phosphodiester linkages between 5'-phosphoryl and 3'-hydroxyl groups in double-stranded DNA using NAD as a coenzyme and as the energy source for the reaction. In Salmonella choleraesuis (strain SC-B67), this protein is DNA ligase B.